Reading from the N-terminus, the 303-residue chain is 4-hydroxy-tetrahydrodipicolinate synthase (303 aa).

Thr-57 lines the pyruvate pocket. The Proton donor/acceptor role is filled by Tyr-143. Lys-171 serves as the catalytic Schiff-base intermediate with substrate. Residue Ile-211 coordinates pyruvate.

The protein belongs to the DapA family. In terms of assembly, homotetramer; dimer of dimers.

It localises to the cytoplasm. It catalyses the reaction L-aspartate 4-semialdehyde + pyruvate = (2S,4S)-4-hydroxy-2,3,4,5-tetrahydrodipicolinate + H2O + H(+). The protein operates within amino-acid biosynthesis; L-lysine biosynthesis via DAP pathway; (S)-tetrahydrodipicolinate from L-aspartate: step 3/4. Its function is as follows. Catalyzes the condensation of (S)-aspartate-beta-semialdehyde [(S)-ASA] and pyruvate to 4-hydroxy-tetrahydrodipicolinate (HTPA). The chain is 4-hydroxy-tetrahydrodipicolinate synthase from Bifidobacterium animalis subsp. lactis (strain AD011).